The following is a 164-amino-acid chain: 16S rRNA aminocarboxypropyltransferase (164 aa).

S-adenosyl-L-methionine is bound by residues T18, I66, L87, and S106.

The protein belongs to the TDD superfamily. TSR3 family.

It localises to the cytoplasm. The catalysed reaction is an N(1)-methylpseudouridine in rRNA + S-adenosyl-L-methionine = N(1)-methyl-N(3)-[(3S)-3-amino-3-carboxypropyl]pseudouridine in rRNA + S-methyl-5'-thioadenosine + H(+). Its function is as follows. Aminocarboxypropyltransferase that catalyzes the aminocarboxypropyl transfer on pseudouridine corresponding to position 914 in M.jannaschii 16S rRNA. It constitutes the last step in biosynthesis of the hypermodified N1-methyl-N3-(3-amino-3-carboxypropyl) pseudouridine (m1acp3-Psi). This Thermoplasma volcanium (strain ATCC 51530 / DSM 4299 / JCM 9571 / NBRC 15438 / GSS1) protein is 16S rRNA aminocarboxypropyltransferase.